Reading from the N-terminus, the 471-residue chain is P2X purinoceptor 2 (471 aa).

Residues 1–42 (MAAAQPKYPAGATARRLARGCWSALWDYETPKVIVVRNRRLG) are Cytoplasmic-facing. Cystine bridges form between cysteine 21/cysteine 439, cysteine 125/cysteine 176, cysteine 136/cysteine 159, cysteine 142/cysteine 170, cysteine 226/cysteine 236, and cysteine 270/cysteine 279. Residues 43-63 (VLYRAVQLLILLYFVWYVFIV) form a helical membrane-spanning segment. Over 64-337 (QKSYQESETG…IVHGQAGKFS (274 aa)) the chain is Extracellular. Residues lysine 81 and lysine 83 each contribute to the ATP site. An N-linked (GlcNAc...) asparagine glycan is attached at asparagine 133. An N-linked (GlcNAc...) asparagine glycan is attached at asparagine 194. Threonine 196 serves as a coordination point for ATP. Residues serine 296, asparagine 300, and arginine 302 each contribute to the ATP site. Asparagine 310 carries N-linked (GlcNAc...) asparagine glycosylation. Lysine 319 lines the ATP pocket. A pore-forming motif region spans residues 320–333 (AYGIRIDVIVHGQA). A helical membrane pass occupies residues 338-358 (LIPTIINLATALTSVGVGSFL). The Cytoplasmic portion of the chain corresponds to 359–471 (CDWILLTFMN…PTDPKGLAQL (113 aa)). Residues 400 to 471 (GQAPPEPGHR…PTDPKGLAQL (72 aa)) are disordered.

Belongs to the P2X receptor family. In terms of assembly, homotrimer and heterotrimer; functional P2XRs are organized as homomeric and heteromeric trimers. Homotrimer. Forms heterotrimer with P2RX1. Forms heterotrimer with P2RX6. Forms heterotrimer with P2RX3. Expressed in both the central and peripheral nervous system, as well as in the pituitary gland.

The protein resides in the cell membrane. The catalysed reaction is Ca(2+)(in) = Ca(2+)(out). The enzyme catalyses K(+)(in) = K(+)(out). It carries out the reaction Na(+)(in) = Na(+)(out). Fast activation by external ATP. Exhibits slow desensitization during prolonged ATP activation. Not sensitive to the ATP agonist:alpha/beta-methylene-ATP. Functionally, ATP-gated nonselective transmembrane cation channel permeable to potassium, sodium and calcium. Activation by extracellular ATP induces a variety of cellular responses, such as excitatory postsynaptic responses in sensory neurons, neuromuscular junctions (NMJ) formation, hearing, perception of taste and peristalsis. In the inner ear, regulates sound transduction and auditory neurotransmission, outer hair cell electromotility, inner ear gap junctions, and K(+) recycling. Mediates synaptic transmission between neurons and from neurons to smooth muscle. The protein is P2X purinoceptor 2 of Homo sapiens (Human).